The chain runs to 244 residues: Ribonuclease HII (244 aa).

The 214-residue stretch at 23 to 236 (KIILGLDEAG…SKKLLKEFEE (214 aa)) folds into the RNase H type-2 domain. A divalent metal cation is bound by residues Asp29, Glu30, and Asp130.

This sequence belongs to the RNase HII family. Requires Mn(2+) as cofactor. Mg(2+) serves as cofactor.

It localises to the cytoplasm. It catalyses the reaction Endonucleolytic cleavage to 5'-phosphomonoester.. Functionally, endonuclease that specifically degrades the RNA of RNA-DNA hybrids. This chain is Ribonuclease HII, found in Methanococcus vannielii (strain ATCC 35089 / DSM 1224 / JCM 13029 / OCM 148 / SB).